Reading from the N-terminus, the 606-residue chain is ATP-dependent rRNA helicase SPB4 (606 aa).

Positions 7–35 (WDNLGFSLLPWIRTGLDVMGFETMTPVQA) match the Q motif motif. In terms of domain architecture, Helicase ATP-binding spans 38–224 (IPMLAGNKDV…KTGLRNPVRI (187 aa)). Position 51 to 58 (51 to 58 (SVTGSGKT)) interacts with ATP. Residues 172–175 (DEAD) carry the DEAD box motif. Positions 248–404 (KLQLLVSILN…ELDLEVKGIT (157 aa)) constitute a Helicase C-terminal domain. Position 254 is a phosphoserine (Ser254). Residues 539–582 (KTLTKERKLERKEKMSLKRKAIEEELKAEELDENAEEERIKEDW) are a coiled coil.

It belongs to the DEAD box helicase family. DDX55/SPB4 subfamily. In terms of assembly, component of pre-60S ribosomal complexes.

The protein resides in the nucleus. It localises to the nucleolus. The catalysed reaction is ATP + H2O = ADP + phosphate + H(+). Functionally, ATP-binding RNA helicase involved in the biogenesis of 60S ribosomal subunits. Binds 90S pre-ribosomal particles and dissociates from pre-60S ribosomal particles after processing of 27SB pre-rRNA. Required for the normal formation of 18S rRNA through the processing of pre-rRNAs at sites A0, A1 and A2, and the normal formation of 25S and 5.8S rRNAs through the processing of pre-rRNAs at sites C1 and C2. Also required for recruitment of NOG2 to pre-ribosomes. The chain is ATP-dependent rRNA helicase SPB4 from Saccharomyces cerevisiae (strain ATCC 204508 / S288c) (Baker's yeast).